The primary structure comprises 467 residues: Argininosuccinate lyase (467 aa).

Belongs to the lyase 1 family. Argininosuccinate lyase subfamily.

It is found in the cytoplasm. The enzyme catalyses 2-(N(omega)-L-arginino)succinate = fumarate + L-arginine. Its pathway is amino-acid biosynthesis; L-arginine biosynthesis; L-arginine from L-ornithine and carbamoyl phosphate: step 3/3. The sequence is that of Argininosuccinate lyase from Methylibium petroleiphilum (strain ATCC BAA-1232 / LMG 22953 / PM1).